Here is a 579-residue protein sequence, read N- to C-terminus: Maintenance of mitochondrial morphology protein 1 (579 aa).

The Lumenal portion of the chain corresponds to 1–43; the sequence is MQQPQQQDLQIGLPYAPVQPPIPSPAAYFAYLPSPSRWTFTQG. The helical transmembrane segment at 44 to 64 threads the bilayer; it reads LIVGQVSMVIVALLLIRYVIF. Residues 65–579 lie on the Cytoplasmic side of the membrane; sequence EDSATALEKE…GLRNRPGFVQ (515 aa). The region spanning 150–391 is the SMP-LTD domain; it reads LPESADWLNV…WPRYWSLTLP (242 aa). 3 disordered regions span residues 309–332, 460–479, and 558–579; these read VLPT…RSRH, RPSL…SGLR, and SSVL…GFVQ. 2 stretches are compositionally biased toward low complexity: residues 311–328 and 465–476; these read PTAN…ATPP and SSRPPHVRSSSS.

Belongs to the MMM1 family. As to quaternary structure, homodimer. Component of the ER-mitochondria encounter structure (ERMES) or MDM complex, composed of MMM1, MDM10, MDM12 and MDM34. An MMM1 homodimer associates with one molecule of MDM12 on each side in a pairwise head-to-tail manner, and the SMP-LTD domains of MMM1 and MDM12 generate a continuous hydrophobic tunnel for phospholipid trafficking.

It is found in the endoplasmic reticulum membrane. Functionally, component of the ERMES/MDM complex, which serves as a molecular tether to connect the endoplasmic reticulum (ER) and mitochondria. Components of this complex are involved in the control of mitochondrial shape and protein biogenesis, and function in nonvesicular lipid trafficking between the ER and mitochondria. The MDM12-MMM1 subcomplex functions in the major beta-barrel assembly pathway that is responsible for biogenesis of all outer membrane beta-barrel proteins, and acts in a late step after the SAM complex. The MDM10-MDM12-MMM1 subcomplex further acts in the TOM40-specific pathway after the action of the MDM12-MMM1 complex. Essential for establishing and maintaining the structure of mitochondria and maintenance of mtDNA nucleoids. The chain is Maintenance of mitochondrial morphology protein 1 from Mycosarcoma maydis (Corn smut fungus).